The primary structure comprises 537 residues: Woronin body major protein hexA (537 aa).

3 stretches are compositionally biased toward basic and acidic residues: residues M1–Q17, D59–R70, and D116–N134. 4 disordered regions span residues M1 to A20, D59 to R79, D116 to Y200, and P269 to S295. Positions N135–N144 are enriched in low complexity. Residues L272–S281 show a composition bias toward basic and acidic residues.

It belongs to the eIF-5A family. Hex1 subfamily. As to quaternary structure, forms oligomers. Self-assembles into hexagonal rods. Binds directly or indirectly to the Woronin body tether lah.

It localises to the cell septum. The protein localises to the cytoplasm. Major component of Woronin bodies, fungal-specific organelles that occlude septal pores in order to separate intact from damaged compartments. HexA binds directly or indirectly to the Woronin body tether that in turn is anchored at the rim of the septal pore. Woronin bodies are important for stress resistance and virulence. The protein is Woronin body major protein hexA of Aspergillus fumigatus (strain ATCC MYA-4609 / CBS 101355 / FGSC A1100 / Af293) (Neosartorya fumigata).